The following is a 492-amino-acid chain: Glutamyl-tRNA(Gln) amidotransferase subunit A (492 aa).

Residues Lys78 and Ser158 each act as charge relay system in the active site. The active-site Acyl-ester intermediate is the Ser182.

Belongs to the amidase family. GatA subfamily. Heterotrimer of A, B and C subunits.

It catalyses the reaction L-glutamyl-tRNA(Gln) + L-glutamine + ATP + H2O = L-glutaminyl-tRNA(Gln) + L-glutamate + ADP + phosphate + H(+). Functionally, allows the formation of correctly charged Gln-tRNA(Gln) through the transamidation of misacylated Glu-tRNA(Gln) in organisms which lack glutaminyl-tRNA synthetase. The reaction takes place in the presence of glutamine and ATP through an activated gamma-phospho-Glu-tRNA(Gln). The chain is Glutamyl-tRNA(Gln) amidotransferase subunit A from Parvibaculum lavamentivorans (strain DS-1 / DSM 13023 / NCIMB 13966).